Consider the following 88-residue polypeptide: UPF0297 protein GTNG_2488 (88 aa).

The protein belongs to the UPF0297 family.

The polypeptide is UPF0297 protein GTNG_2488 (Geobacillus thermodenitrificans (strain NG80-2)).